We begin with the raw amino-acid sequence, 540 residues long: 2,3-bisphosphoglycerate-independent phosphoglycerate mutase (540 aa).

Asp25 and Ser75 together coordinate Mn(2+). The active-site Phosphoserine intermediate is the Ser75. Substrate contacts are provided by residues His136, 166–167, Arg198, Arg204, 269–272, and Lys342; these read RD and RPDR. Asp409, His413, Asp450, His451, and His468 together coordinate Mn(2+).

Belongs to the BPG-independent phosphoglycerate mutase family. Monomer. The cofactor is Mn(2+).

It carries out the reaction (2R)-2-phosphoglycerate = (2R)-3-phosphoglycerate. Its pathway is carbohydrate degradation; glycolysis; pyruvate from D-glyceraldehyde 3-phosphate: step 3/5. Catalyzes the interconversion of 2-phosphoglycerate and 3-phosphoglycerate. The chain is 2,3-bisphosphoglycerate-independent phosphoglycerate mutase from Prochlorococcus marinus subsp. pastoris (strain CCMP1986 / NIES-2087 / MED4).